A 120-amino-acid chain; its full sequence is Fumarate reductase subunit D (120 aa).

Helical transmembrane passes span 25-45, 57-77, and 100-120; these read FAMLTPVTILVLGIMVPLGIL, GFVTSFIGALFTIATLALPMW, and IACYATAFLVSALAIIFVFMI.

Belongs to the FrdD family. In terms of assembly, part of an enzyme complex containing four subunits: a flavoprotein (FrdA), an iron-sulfur protein (FrdB), and two hydrophobic anchor proteins (FrdC and FrdD).

The protein localises to the cell inner membrane. In terms of biological role, anchors the catalytic components of the fumarate reductase complex to the cell membrane, binds quinones. In Photobacterium profundum (strain SS9), this protein is Fumarate reductase subunit D.